Consider the following 256-residue polypeptide: Proteasome subunit alpha (256 aa).

Residues 235 to 256 (ELDSNGSDGNGDAPELNGGSSD) form a disordered region.

It belongs to the peptidase T1A family. As to quaternary structure, the 20S proteasome core is composed of 14 alpha and 14 beta subunits that assemble into four stacked heptameric rings, resulting in a barrel-shaped structure. The two inner rings, each composed of seven catalytic beta subunits, are sandwiched by two outer rings, each composed of seven alpha subunits. The catalytic chamber with the active sites is on the inside of the barrel. Has a gated structure, the ends of the cylinder being occluded by the N-termini of the alpha-subunits. Is capped by the proteasome-associated ATPase, ARC.

The protein resides in the cytoplasm. The protein operates within protein degradation; proteasomal Pup-dependent pathway. The formation of the proteasomal ATPase ARC-20S proteasome complex, likely via the docking of the C-termini of ARC into the intersubunit pockets in the alpha-rings, may trigger opening of the gate for substrate entry. Interconversion between the open-gate and close-gate conformations leads to a dynamic regulation of the 20S proteasome proteolysis activity. Functionally, component of the proteasome core, a large protease complex with broad specificity involved in protein degradation. The chain is Proteasome subunit alpha from Mycolicibacterium paratuberculosis (strain ATCC BAA-968 / K-10) (Mycobacterium paratuberculosis).